The primary structure comprises 125 residues: Translation initiation factor 5A (125 aa).

Residue K35 is modified to Hypusine.

Belongs to the eIF-5A family.

Its subcellular location is the cytoplasm. Functions by promoting the formation of the first peptide bond. The chain is Translation initiation factor 5A (eIF5A) from Methanosphaerula palustris (strain ATCC BAA-1556 / DSM 19958 / E1-9c).